The sequence spans 345 residues: Beta-hexosaminidase (345 aa).

Substrate is bound by residues Asp60, Arg68, Arg132, and 162–163 (KH). The active-site Proton donor/acceptor is the His175. Asp247 acts as the Nucleophile in catalysis.

The protein belongs to the glycosyl hydrolase 3 family. NagZ subfamily.

It localises to the cytoplasm. It carries out the reaction Hydrolysis of terminal non-reducing N-acetyl-D-hexosamine residues in N-acetyl-beta-D-hexosaminides.. It participates in cell wall biogenesis; peptidoglycan recycling. Plays a role in peptidoglycan recycling by cleaving the terminal beta-1,4-linked N-acetylglucosamine (GlcNAc) from peptide-linked peptidoglycan fragments, giving rise to free GlcNAc, anhydro-N-acetylmuramic acid and anhydro-N-acetylmuramic acid-linked peptides. The polypeptide is Beta-hexosaminidase (Actinobacillus pleuropneumoniae serotype 5b (strain L20)).